The following is a 224-amino-acid chain: LexA repressor (224 aa).

The H-T-H motif DNA-binding region spans 41-61 (MREIGDAVGLSSLSSVTHQLN). Active-site for autocatalytic cleavage activity residues include Ser-148 and Lys-185.

Belongs to the peptidase S24 family. As to quaternary structure, homodimer.

It catalyses the reaction Hydrolysis of Ala-|-Gly bond in repressor LexA.. Represses a number of genes involved in the response to DNA damage (SOS response), including recA and lexA. In the presence of single-stranded DNA, RecA interacts with LexA causing an autocatalytic cleavage which disrupts the DNA-binding part of LexA, leading to derepression of the SOS regulon and eventually DNA repair. The polypeptide is LexA repressor (Leifsonia xyli subsp. xyli (strain CTCB07)).